A 351-amino-acid polypeptide reads, in one-letter code: Heat shock factor protein HSF30 (351 aa).

Residues 29–123 mediate DNA binding; sequence PPPFLSKTYE…LLKTIKRRRN (95 aa).

The protein belongs to the HSF family. As to quaternary structure, homotrimer. Exhibits temperature-dependent phosphorylation.

The protein resides in the nucleus. DNA-binding protein that specifically binds heat shock promoter elements (HSE) and activates transcription. In Solanum peruvianum (Peruvian tomato), this protein is Heat shock factor protein HSF30 (HSF30).